A 342-amino-acid polypeptide reads, in one-letter code: N-acetyl-gamma-glutamyl-phosphate reductase (342 aa).

Cys-147 is an active-site residue.

It belongs to the NAGSA dehydrogenase family. Type 1 subfamily.

The protein localises to the cytoplasm. It carries out the reaction N-acetyl-L-glutamate 5-semialdehyde + phosphate + NADP(+) = N-acetyl-L-glutamyl 5-phosphate + NADPH + H(+). Its pathway is amino-acid biosynthesis; L-arginine biosynthesis; N(2)-acetyl-L-ornithine from L-glutamate: step 3/4. Its function is as follows. Catalyzes the NADPH-dependent reduction of N-acetyl-5-glutamyl phosphate to yield N-acetyl-L-glutamate 5-semialdehyde. The protein is N-acetyl-gamma-glutamyl-phosphate reductase of Campylobacter jejuni subsp. jejuni serotype O:6 (strain 81116 / NCTC 11828).